Consider the following 66-residue polypeptide: Small ribosomal subunit protein bS21 (66 aa).

This sequence belongs to the bacterial ribosomal protein bS21 family.

The sequence is that of Small ribosomal subunit protein bS21 from Rickettsia peacockii (strain Rustic).